Consider the following 354-residue polypeptide: Histidinol-phosphate aminotransferase (354 aa).

An N6-(pyridoxal phosphate)lysine modification is found at Lys222.

The protein belongs to the class-II pyridoxal-phosphate-dependent aminotransferase family. Histidinol-phosphate aminotransferase subfamily. As to quaternary structure, homodimer. The cofactor is pyridoxal 5'-phosphate.

The catalysed reaction is L-histidinol phosphate + 2-oxoglutarate = 3-(imidazol-4-yl)-2-oxopropyl phosphate + L-glutamate. It functions in the pathway amino-acid biosynthesis; L-histidine biosynthesis; L-histidine from 5-phospho-alpha-D-ribose 1-diphosphate: step 7/9. This is Histidinol-phosphate aminotransferase from Staphylococcus carnosus (strain TM300).